The following is a 79-amino-acid chain: D-alanyl carrier protein (79 aa).

The region spanning 1-77 is the Carrier domain; it reads MDTKQGVLDI…KIVAKVESLE (77 aa). S35 carries the O-(pantetheine 4'-phosphoryl)serine modification.

It belongs to the DltC family. 4'-phosphopantetheine is transferred from CoA to a specific serine of apo-DCP.

It localises to the cytoplasm. Its pathway is cell wall biogenesis; lipoteichoic acid biosynthesis. In terms of biological role, carrier protein involved in the D-alanylation of lipoteichoic acid (LTA). The loading of thioester-linked D-alanine onto DltC is catalyzed by D-alanine--D-alanyl carrier protein ligase DltA. The DltC-carried D-alanyl group is further transferred to cell membrane phosphatidylglycerol (PG) by forming an ester bond, probably catalyzed by DltD. D-alanylation of LTA plays an important role in modulating the properties of the cell wall in Gram-positive bacteria, influencing the net charge of the cell wall. This Lactobacillus helveticus (strain DPC 4571) protein is D-alanyl carrier protein.